The sequence spans 346 residues: Selenide, water dikinase (346 aa).

Cys15 is a catalytic residue. Residues Lys18 and 46 to 48 (SKD) contribute to the ATP site. Asp49 lines the Mg(2+) pocket. ATP-binding positions include Asp66, Asp89, and 137-139 (GHS). A Mg(2+)-binding site is contributed by Asp89. Residue Asp225 coordinates Mg(2+).

Belongs to the selenophosphate synthase 1 family. Class I subfamily. As to quaternary structure, homodimer. Mg(2+) serves as cofactor.

The enzyme catalyses hydrogenselenide + ATP + H2O = selenophosphate + AMP + phosphate + 2 H(+). Synthesizes selenophosphate from selenide and ATP. This Photobacterium profundum (strain SS9) protein is Selenide, water dikinase.